We begin with the raw amino-acid sequence, 811 residues long: Probable potassium transporter 16 (811 aa).

Residues 1–66 (MAQQQAGARG…GQESWMRTLR (66 aa)) lie on the Cytoplasmic side of the membrane. The helical transmembrane segment at 67–87 (LGFQCVGILHADLGTSPLYVY) threads the bilayer. The Extracellular segment spans residues 88–100 (QNTFKYGIKHEDD). The helical transmembrane segment at 101 to 121 (IIGVLSLIIYSFVLFTMVKIV) threads the bilayer. Topologically, residues 122-190 (FIALHANDDG…KSQLEKKPAK (69 aa)) are cytoplasmic. The helical transmembrane segment at 191–211 (IAVFFLTIFATALAISDCVLN) threads the bilayer. The Extracellular portion of the chain corresponds to 212–228 (PSVSVLSAVNGLKLRAP). The helical transmembrane segment at 229 to 249 (HLTTDEVVWITVGILVVFFAV) threads the bilayer. Residues 250–256 (QRFGTDK) lie on the Cytoplasmic side of the membrane. Residues 257 to 277 (IGYTFAPVVVVWLLLISGIGI) form a helical membrane-spanning segment. The Extracellular portion of the chain corresponds to 278-310 (YDLVKYDVGVLRAFNPKYIIDYFRRNKKDGWVQ). A helical membrane pass occupies residues 311 to 331 (LGEVLLTFTGTEALFADLGYF). Residues 332 to 337 (SIKSIQ) are Cytoplasmic-facing. The helical transmembrane segment at 338-358 (LSSTFVLLPSVLCTYIGQAAY) threads the bilayer. Residues 359–379 (LRKHMDQQHIQNAFFNSIPRP) are Extracellular-facing. Residues 380–400 (LFWPMFVLAIMTSVIGCQAMV) form a helical membrane-spanning segment. The Cytoplasmic portion of the chain corresponds to 401–438 (SCAFATMSHLQTLNCFPRIKILHTSRRYSGQLYSPEVN). The helical transmembrane segment at 439–459 (FFLCLLSCVITLSFRTTGFIV) threads the bilayer. The Extracellular portion of the chain corresponds to 460 to 463 (KAHE). A helical transmembrane segment spans residues 464–484 (ICVVLVMVITTILMTIVMLLV). The Cytoplasmic segment spans residues 485-488 (WKVN). A helical membrane pass occupies residues 489–509 (IWWIVLFFVVFMSTETVYLSA). At 510–519 (VLYKFTKGPY) the chain is on the extracellular side. A helical transmembrane segment spans residues 520 to 540 (MPLAMSAVLMVIMFVWHYVHV). Topologically, residues 541 to 811 (KRYKFELEHT…LLKVGITYEI (271 aa)) are cytoplasmic.

Belongs to the HAK/KUP transporter (TC 2.A.72.3) family.

Its subcellular location is the membrane. Its function is as follows. High-affinity potassium transporter. The protein is Probable potassium transporter 16 (HAK16) of Oryza sativa subsp. japonica (Rice).